We begin with the raw amino-acid sequence, 267 residues long: MSIQLGIIGGGVMAEAILARLIAEKTYAPEEIIVGEPHGARRDYLQKTYQVRVSPDNQEAANVSEVLLLAVKPQVLDRVLASLAGGANRPLVISILAGVSLQRIQKGFPDHAIIRAMPNTPATVGAGMTAIAANKMVEPDQLAKAKAIFSAVGNVVEVPENLMDAVTGVSGSGPAYVALMIEALADGGVLAGLPRAIAQKLALQTVLGTAELIKETEEHPAQIKDKVTSPGGTTIAGVAVLEKMGFRSAIIEAVRAAYRRSQELGKK.

This sequence belongs to the pyrroline-5-carboxylate reductase family.

It is found in the cytoplasm. The catalysed reaction is L-proline + NADP(+) = (S)-1-pyrroline-5-carboxylate + NADPH + 2 H(+). It carries out the reaction L-proline + NAD(+) = (S)-1-pyrroline-5-carboxylate + NADH + 2 H(+). It participates in amino-acid biosynthesis; L-proline biosynthesis; L-proline from L-glutamate 5-semialdehyde: step 1/1. Its function is as follows. Catalyzes the reduction of 1-pyrroline-5-carboxylate (PCA) to L-proline. This Synechocystis sp. (strain ATCC 27184 / PCC 6803 / Kazusa) protein is Pyrroline-5-carboxylate reductase.